A 227-amino-acid chain; its full sequence is Guanylate kinase (227 aa).

The Guanylate kinase-like domain maps to 21–199 (GNLFMVVAPS…ALAELECIVA (179 aa)). An ATP-binding site is contributed by 28-35 (APSGAGKS).

It belongs to the guanylate kinase family.

It localises to the cytoplasm. The enzyme catalyses GMP + ATP = GDP + ADP. In terms of biological role, essential for recycling GMP and indirectly, cGMP. The sequence is that of Guanylate kinase from Burkholderia thailandensis (strain ATCC 700388 / DSM 13276 / CCUG 48851 / CIP 106301 / E264).